The following is a 260-amino-acid chain: 5-oxoprolinase subunit A 2 (260 aa).

This sequence belongs to the LamB/PxpA family. Forms a complex composed of PxpA, PxpB and PxpC.

The enzyme catalyses 5-oxo-L-proline + ATP + 2 H2O = L-glutamate + ADP + phosphate + H(+). Catalyzes the cleavage of 5-oxoproline to form L-glutamate coupled to the hydrolysis of ATP to ADP and inorganic phosphate. This chain is 5-oxoprolinase subunit A 2, found in Ralstonia nicotianae (strain ATCC BAA-1114 / GMI1000) (Ralstonia solanacearum).